The sequence spans 283 residues: Mitochondrial intermembrane space import and assembly protein 40 (283 aa).

Residues 1–35 (MFRPASRALLRAPTPAVGVARGPTRRFISSSTGST) constitute a mitochondrion transit peptide. At 36 to 46 (KPRSWKNTFIR) the chain is on the mitochondrial matrix side. Residues 47-64 (VGLASGAVYYYNTSSVFA) traverse the membrane as a helical; Signal-anchor for type II membrane protein segment. Topologically, residues 65–283 (ETPSLSFRPE…EKTPEQQTEK (219 aa)) are mitochondrial intermembrane. The segment at 72 to 136 (RPEAQPKHED…SAEELEAEAD (65 aa)) is disordered. Residues 91–101 (IKPKSREEKKA) are compositionally biased toward basic and acidic residues. Residues 102–119 (PAAAADAAATPASTGANA) show a composition bias toward low complexity. 3 disulfide bridges follow: cysteine 152–cysteine 154, cysteine 163–cysteine 196, and cysteine 173–cysteine 186. Positions 160–204 (YGPCGEEFRAAFSCFVYSEEEPKGMDCIDKFKAMQDCFRAHPDVY) constitute a CHCH domain. 2 short sequence motifs (cx9C motif) span residues 163 to 173 (CGEEFRAAFSC) and 186 to 196 (CIDKFKAMQDC). A disordered region spans residues 211–283 (DEEAGAEANA…EKTPEQQTEK (73 aa)). Composition is skewed to basic and acidic residues over residues 237–251 (VEKH…DEVK) and 272–283 (EQEKTPEQQTEK).

In terms of assembly, monomer. Cu(2+) serves as cofactor. The cofactor is Zn(2+).

The protein localises to the mitochondrion inner membrane. Its function is as follows. Required for the import and folding of small cysteine-containing proteins (small Tim) in the mitochondrial intermembrane space (IMS). Forms a redox cycle with ERV1 that involves a disulfide relay system. Precursor proteins to be imported into the IMS are translocated in their reduced form into the mitochondria. The oxidized form of MIA40 forms a transient intermolecular disulfide bridge with the reduced precursor protein, resulting in oxidation of the precursor protein that now contains an intramolecular disulfide bond and is able to undergo folding in the IMS. This Emericella nidulans (strain FGSC A4 / ATCC 38163 / CBS 112.46 / NRRL 194 / M139) (Aspergillus nidulans) protein is Mitochondrial intermembrane space import and assembly protein 40 (mia40).